The following is a 286-amino-acid chain: Urease accessory protein UreD 2 (286 aa).

It belongs to the UreD family. As to quaternary structure, ureD, UreF and UreG form a complex that acts as a GTP-hydrolysis-dependent molecular chaperone, activating the urease apoprotein by helping to assemble the nickel containing metallocenter of UreC. The UreE protein probably delivers the nickel.

The protein localises to the cytoplasm. Required for maturation of urease via the functional incorporation of the urease nickel metallocenter. The chain is Urease accessory protein UreD 2 from Bradyrhizobium sp. (strain BTAi1 / ATCC BAA-1182).